A 187-amino-acid chain; its full sequence is Ubiquinone biosynthesis protein COQ4 homolog, mitochondrial (187 aa).

4 residues coordinate Zn(2+): histidine 77, aspartate 78, histidine 81, and glutamate 93.

Belongs to the COQ4 family. Component of a multi-subunit COQ enzyme complex. Zn(2+) serves as cofactor.

It is found in the mitochondrion inner membrane. It carries out the reaction a 4-hydroxy-3-methoxy-5-(all-trans-polyprenyl)benzoate + H(+) = a 2-methoxy-6-(all-trans-polyprenyl)phenol + CO2. Its pathway is cofactor biosynthesis; ubiquinone biosynthesis. In terms of biological role, lyase that catalyzes the C1-decarboxylation of 4-hydroxy-3-methoxy-5-(all-trans-polyprenyl)benzoic acid into 2-methoxy-6-(all-trans-polyprenyl)phenol during ubiquinone biosynthesis. The protein is Ubiquinone biosynthesis protein COQ4 homolog, mitochondrial of Leishmania infantum.